The following is a 360-amino-acid chain: Metalloendoproteinase 5-MMP (360 aa).

The signal sequence occupies residues 1-20 (MRTLLLTILIFFFTVNPISA). The propeptide at 21–142 (KFYTNVSSIP…GGKILRTTEK (122 aa)) is activation peptide. Asn25, Asn36, and Asn78 each carry an N-linked (GlcNAc...) asparagine glycan. Residues 117–124 (PRCGNPDL) carry the Cysteine switch motif. Zn(2+) is bound at residue Cys119. 2 N-linked (GlcNAc...) asparagine glycosylation sites follow: Asn168 and Asn191. His270 is a binding site for Zn(2+). Residue Glu271 is part of the active site. Zn(2+)-binding residues include His274 and His280. Positions 312 to 336 (LYGGNPNGDGGGSKPSRESQSTGGD) are disordered. Ser337 carries GPI-anchor amidated serine lipidation. The propeptide at 338–360 (VRRWRGWMISLSSIATCIFLISV) is removed in mature form.

Belongs to the peptidase M10A family. Matrix metalloproteinases (MMPs) subfamily. Requires Zn(2+) as cofactor. Mostly expressed in leaves, roots and stems, and, to a lower extent, in flowers.

It localises to the cell membrane. With respect to regulation, repressed by acetohydroxamic acid (AHA). Functionally, matrix metalloproteinases (MMPs) or matrixins may play a role in the degradation and remodeling of the extracellular matrix (ECM) during development or in response to stresses. Active on Mca-KESAbuNLFVLKDpaR-NH(2) (QF75) and, to some extent, on McaPLGLDpaAR-NH(2) (QF24), myelin basic protein (MBP) and beta-casein. The sequence is that of Metalloendoproteinase 5-MMP from Arabidopsis thaliana (Mouse-ear cress).